The sequence spans 340 residues: Phospho-N-acetylmuramoyl-pentapeptide-transferase (340 aa).

10 consecutive transmembrane segments (helical) span residues 3-23 (MSLI…PHFI), 53-73 (GGTV…FHVF), 79-99 (AYGA…IGFL), 119-139 (MALQ…PSGT), 144-164 (IGGL…FWIV), 176-196 (IDGL…IIAF), 200-220 (ELAI…FFVF), 227-247 (VFMG…ISIA), 250-270 (VEWT…SVML), and 315-335 (VDAF…WMVL).

It belongs to the glycosyltransferase 4 family. MraY subfamily. Mg(2+) is required as a cofactor.

It localises to the cell membrane. It catalyses the reaction UDP-N-acetyl-alpha-D-muramoyl-L-alanyl-gamma-D-glutamyl-L-lysyl-D-alanyl-D-alanine + di-trans,octa-cis-undecaprenyl phosphate = Mur2Ac(oyl-L-Ala-gamma-D-Glu-L-Lys-D-Ala-D-Ala)-di-trans,octa-cis-undecaprenyl diphosphate + UMP. It participates in cell wall biogenesis; peptidoglycan biosynthesis. Functionally, catalyzes the initial step of the lipid cycle reactions in the biosynthesis of the cell wall peptidoglycan: transfers peptidoglycan precursor phospho-MurNAc-pentapeptide from UDP-MurNAc-pentapeptide onto the lipid carrier undecaprenyl phosphate, yielding undecaprenyl-pyrophosphoryl-MurNAc-pentapeptide, known as lipid I. This Streptococcus thermophilus (strain ATCC BAA-250 / LMG 18311) protein is Phospho-N-acetylmuramoyl-pentapeptide-transferase.